Here is a 250-residue protein sequence, read N- to C-terminus: Putative ABC transporter ATP-binding protein YjkB (250 aa).

Residues 13–245 enclose the ABC transporter domain; sequence ISFRSVRKSY…PQHEAAKEFL (233 aa). 49–56 is an ATP binding site; the sequence is GPSGSGKS.

It belongs to the ABC transporter superfamily.

The polypeptide is Putative ABC transporter ATP-binding protein YjkB (yjkB) (Bacillus subtilis (strain 168)).